The primary structure comprises 471 residues: Trigger factor (471 aa).

One can recognise a PPIase FKBP-type domain in the interval 169–264; the sequence is GDVAVVDFKG…LKEIKEKELP (96 aa).

This sequence belongs to the FKBP-type PPIase family. Tig subfamily.

It localises to the cytoplasm. The enzyme catalyses [protein]-peptidylproline (omega=180) = [protein]-peptidylproline (omega=0). Its function is as follows. Involved in protein export. Acts as a chaperone by maintaining the newly synthesized protein in an open conformation. Functions as a peptidyl-prolyl cis-trans isomerase. The chain is Trigger factor from Nostoc sp. (strain PCC 7120 / SAG 25.82 / UTEX 2576).